The primary structure comprises 542 residues: Hydroxylamine reductase (542 aa).

[4Fe-4S] cluster is bound by residues Cys3, Cys6, Cys15, and Cys21. Hybrid [4Fe-2O-2S] cluster contacts are provided by His238, Glu262, Cys307, Cys398, Cys426, Cys451, Glu485, and Lys487. Residue Cys398 is modified to Cysteine persulfide.

This sequence belongs to the HCP family. It depends on [4Fe-4S] cluster as a cofactor. Hybrid [4Fe-2O-2S] cluster is required as a cofactor.

Its subcellular location is the cytoplasm. The catalysed reaction is A + NH4(+) + H2O = hydroxylamine + AH2 + H(+). Catalyzes the reduction of hydroxylamine to form NH(3) and H(2)O. This Microcystis aeruginosa (strain NIES-843 / IAM M-2473) protein is Hydroxylamine reductase.